Consider the following 257-residue polypeptide: N-acetylglucosaminyldiphosphoundecaprenol N-acetyl-beta-D-mannosaminyltransferase (257 aa).

Belongs to the glycosyltransferase 26 family. TagA/TarA subfamily.

The catalysed reaction is UDP-N-acetyl-alpha-D-mannosamine + N-acetyl-alpha-D-glucosaminyl-di-trans,octa-cis-undecaprenyl diphosphate = N-acetyl-beta-D-mannosaminyl-(1-&gt;4)-N-acetyl-alpha-D-glucosaminyl di-trans,octa-cis-undecaprenyl diphosphate + UDP + H(+). The protein operates within cell wall biogenesis; poly(ribitol phosphate) teichoic acid biosynthesis. Its function is as follows. Catalyzes the conversion of GlcNAc-PP-undecaprenol into ManNAc-GlcNAc-PP-undecaprenol, the first committed lipid intermediate in the de novo synthesis of teichoic acid. This is N-acetylglucosaminyldiphosphoundecaprenol N-acetyl-beta-D-mannosaminyltransferase from Bacillus spizizenii (strain ATCC 23059 / NRRL B-14472 / W23) (Bacillus subtilis subsp. spizizenii).